Consider the following 121-residue polypeptide: Chorion class CA protein ERA.4 (121 aa).

A signal peptide spans 1-23 (MSSSFFCFFLFCFQTCLIQNVYS). The tract at residues 24–57 (QCLGRVGPGGPPLGPYGGPLGGPGYGPVGYGGCG) is left arm. The segment at 58–105 (GYGGSGIGNVAVAGELPVAGSAAVLGQVPVIGAVEFAGPACAVGSVSI) is central domain. The interval 106–121 (SGACGPTCGCGGSPYY) is right arm.

It belongs to the chorion protein family.

In terms of biological role, this protein is one of many from the eggshell of the silk moth. The sequence is that of Chorion class CA protein ERA.4 (ERA.4) from Bombyx mori (Silk moth).